Here is a 410-residue protein sequence, read N- to C-terminus: Structural protein ORF142 (410 aa).

Disordered stretches follow at residues 1–24 (MNQNHTLDNERNDDDEHSNNHVDT) and 156–197 (PTST…VNIS). A compositionally biased stretch (acidic residues) spans 161 to 188 (DDNDNENRSDDDDDDDDYRNDREEVEDS).

It is found in the virion. This Trichoplusia ni ascovirus 2c (TnAV-2c) protein is Structural protein ORF142.